An 854-amino-acid polypeptide reads, in one-letter code: Espin (854 aa).

ANK repeat units follow at residues 1-31 (MALE…GPSL), 35-64 (LDAL…LPAA), 69-99 (NGAT…RVQD), 103-133 (SGAT…DPTA), 137-167 (MGAL…GVNA), 171-201 (NGAT…DPHA), 205-235 (DGMT…SLSE), 239-268 (DGAT…EISA), and 271-300 (WGGT…ELDV). A phosphoserine mark is found at Ser-338 and Ser-342. Over residues 338–349 (SRDPSAELEAKQ) the composition is skewed to basic and acidic residues. 5 disordered regions span residues 338–400 (SRDP…CGLS), 415–474 (NPEL…MQTK), 487–713 (KELS…AGFQ), 765–788 (KMQE…SMPA), and 800–832 (EERE…TLGY). The segment covering 352–377 (SGMSSPNTTVSVQPLNFDLSSPTSTL) has biased composition (polar residues). Residues 378–389 (SNYDSCSSSHSS) are compositionally biased toward low complexity. Pro residues predominate over residues 428–463 (PTPPPPPPSFPPPPPPPGTQLPPPPPGYPAPKPPVG). Residues 487-505 (KELSSCDGHDGLRRQDSSR) are compositionally biased toward basic and acidic residues. Residue Ser-515 is modified to Phosphoserine. Pro residues predominate over residues 595-620 (LPPPPPPPPPPLPEAASSPPPAPPLP). Residues 633–642 (SSSSTGSTKS) are compositionally biased toward low complexity. Polar residues-rich tracts occupy residues 643-652 (FNMMSPTGDN) and 667-678 (PTPQSKGLTTVF). Position 647 is a phosphoserine (Ser-647). Positions 651 to 668 (DNSELLAEIKAGKSLKPT) constitute a WH2 domain. Ser-690 and Ser-696 each carry phosphoserine. Over residues 692–703 (LPSVSPALSPVR) the composition is skewed to low complexity. The stretch at 756–830 (QVMVRKMQLK…KEQSEKLRTL (75 aa)) forms a coiled coil.

As to quaternary structure, monomer. Binds F-actin in a Ca(2+)-resistant fashion. Interacts (via N-terminus) with BAIAP2 (via SH3-domain). Interacts with PFN2. Interacts with MYO3A (via C-terminus). Interacts with MYO3B (via C-terminus).

It localises to the cytoplasm. Its subcellular location is the cytoskeleton. It is found in the cell projection. The protein resides in the stereocilium. The protein localises to the microvillus. In terms of biological role, multifunctional actin-bundling protein. Plays a major role in regulating the organization, dimension, dynamics and signaling capacities of the actin filament-rich microvilli in the mechanosensory and chemosensory cells. Required for the assembly and stabilization of the stereociliary parallel actin bundles. Plays a crucial role in the formation and maintenance of inner ear hair cell stereocilia. Involved in the elongation of actin in stereocilia. In extrastriolar hair cells, required for targeting MYO3B to stereocilia tips, and for regulation of stereocilia diameter and staircase formation. The protein is Espin (ESPN) of Homo sapiens (Human).